The chain runs to 274 residues: Formamidopyrimidine-DNA glycosylase (274 aa).

Catalysis depends on proline 2, which acts as the Schiff-base intermediate with DNA. Residue glutamate 3 is the Proton donor of the active site. The active-site Proton donor; for beta-elimination activity is the lysine 56. Positions 89, 107, and 148 each coordinate DNA. The FPG-type zinc-finger motif lies at 233 to 267 (LAYGRAREMCVNCETTLENLKLGQRASVFCPQCQP). Arginine 257 (proton donor; for delta-elimination activity) is an active-site residue.

Belongs to the FPG family. Monomer. Zn(2+) serves as cofactor.

It catalyses the reaction Hydrolysis of DNA containing ring-opened 7-methylguanine residues, releasing 2,6-diamino-4-hydroxy-5-(N-methyl)formamidopyrimidine.. It carries out the reaction 2'-deoxyribonucleotide-(2'-deoxyribose 5'-phosphate)-2'-deoxyribonucleotide-DNA = a 3'-end 2'-deoxyribonucleotide-(2,3-dehydro-2,3-deoxyribose 5'-phosphate)-DNA + a 5'-end 5'-phospho-2'-deoxyribonucleoside-DNA + H(+). In terms of biological role, involved in base excision repair of DNA damaged by oxidation or by mutagenic agents. Acts as a DNA glycosylase that recognizes and removes damaged bases. Has a preference for oxidized purines, such as 7,8-dihydro-8-oxoguanine (8-oxoG). Has AP (apurinic/apyrimidinic) lyase activity and introduces nicks in the DNA strand. Cleaves the DNA backbone by beta-delta elimination to generate a single-strand break at the site of the removed base with both 3'- and 5'-phosphates. The polypeptide is Formamidopyrimidine-DNA glycosylase (Acinetobacter baumannii (strain SDF)).